The following is a 328-amino-acid chain: Homeobox protein Hox-C13 (328 aa).

Positions 23-48 are disordered; the sequence is AAESGSGGGGGGGGAGGAGGGCSGAS. Positions 27–45 are enriched in gly residues; that stretch reads GSGGGGGGGGAGGAGGGCS. A DNA-binding region (homeobox) is located at residues 258-317; it reads GRKKRVPYTKVQLKELEKEYAASKFITKEKRRRISATTNLSERQVTIWFQNRRVKEKKVV.

The protein belongs to the Abd-B homeobox family. Expressed in differentiating keratinocytes. In the hair follicle lower matrix, expressed in all 3 hair shaft-forming compartments, i.e. cuticle, cortex and medulla. Expression stops sharply at the boundary with the germinal matrix compartment.

It localises to the nucleus. In terms of biological role, transcription factor which plays a role in hair follicle differentiation. Regulates FOXQ1 expression and that of other hair-specific genes. In Mus musculus (Mouse), this protein is Homeobox protein Hox-C13 (Hoxc13).